A 416-amino-acid polypeptide reads, in one-letter code: ORC1-type DNA replication protein 9 (416 aa).

Residues 79-83 (SGKSL), Y226, and R238 each bind ATP.

The protein belongs to the CDC6/cdc18 family.

In terms of biological role, involved in regulation of DNA replication. This chain is ORC1-type DNA replication protein 9 (cdc6i), found in Haloarcula marismortui (strain ATCC 43049 / DSM 3752 / JCM 8966 / VKM B-1809) (Halobacterium marismortui).